A 140-amino-acid chain; its full sequence is NADPH-dependent 7-cyano-7-deazaguanine reductase (140 aa).

The active-site Thioimide intermediate is cysteine 49. The active-site Proton donor is the aspartate 56. Substrate is bound by residues 71–73 (IEL) and 90–91 (HE).

Belongs to the GTP cyclohydrolase I family. QueF type 1 subfamily.

Its subcellular location is the cytoplasm. It catalyses the reaction 7-aminomethyl-7-carbaguanine + 2 NADP(+) = 7-cyano-7-deazaguanine + 2 NADPH + 3 H(+). The protein operates within tRNA modification; tRNA-queuosine biosynthesis. In terms of biological role, catalyzes the NADPH-dependent reduction of 7-cyano-7-deazaguanine (preQ0) to 7-aminomethyl-7-deazaguanine (preQ1). This is NADPH-dependent 7-cyano-7-deazaguanine reductase from Prochlorococcus marinus (strain NATL2A).